Reading from the N-terminus, the 415-residue chain is MTLTDDTTTAQNSRHGDPIEVARELTRKWQTTVVERDKAGGSATEEREDLRASGLLSVTVPRHLGGWGADWPTALEVVREIAKVDGSLGHLFGYHLSTPAVIDLWGSPEQKERLLRQLAENNWWTGNASSENNSHILDWKVTATPADDGGYFFNGIKHFSSGAKGSDLLLVFGVIPEGFPQQGAIVAAAIPTTREGVQPNDDWQALGMRRTDSGTTEFHNVAVRPDEVLGKPNAILEAFLASGRGSLFGPIVQLVFSSVYLGIARGALETAREYTRTQARPWTPAGVTQAVEDPYTIRSYGEFGIQLQAADAAAREAAQLLQAAWDKGDALTSQERGELMVQISGVKAIATQAALDVTSRIFEVIGARGTHPKYGFDRFWRNIRTHTLHDPVSYKIAEVGNYVLNQRYPIPGFTS.

Residues Y94, 127–132 (NASSEN), 157–161 (KHFSS), R280, 365–366 (IG), and T387 each bind FMN. A lid loop region spans residues 129 to 140 (SSENNSHILDWK).

Belongs to the DszC flavin monooxygenase family. In terms of assembly, homotetramer.

The protein localises to the cytoplasm. It catalyses the reaction dibenzothiophene + 2 FMNH2 + 2 O2 = dibenzothiophene 5,5-dioxide + 2 FMN + 2 H2O + 2 H(+). The enzyme catalyses dibenzothiophene + FMNH2 + O2 = dibenzothiophene 5-oxide + FMN + H2O + H(+). It carries out the reaction dibenzothiophene 5-oxide + FMNH2 + O2 = dibenzothiophene 5,5-dioxide + FMN + H2O + H(+). It functions in the pathway sulfur metabolism; dibenzothiophene degradation. Inhibited at high concentrations of FMN or FAD. Its function is as follows. Catalyzes the first step of the '4S' desulfurization pathway that removes covalently bound sulfur from dibenzothiophene (DBT) without breaking carbon-carbon bonds. Sulfur dioxygenase which converts DBT to DBT-sulfone (DBTO2 or DBT 5,5-dioxide) probably in a stepwise manner. In addition to FMNH2 can also use FAD (although FAD is less efficient). The protein is Dibenzothiophene monooxygenase of Mycolicibacterium goodii (Mycobacterium goodii).